The sequence spans 187 residues: Cytokinin riboside 5'-monophosphate phosphoribohydrolase (187 aa).

Substrate-binding positions include glutamate 80, 98 to 99 (RK), 115 to 121 (GVGTLDE), and threonine 127.

It belongs to the LOG family.

It carries out the reaction N(6)-(dimethylallyl)adenosine 5'-phosphate + H2O = N(6)-dimethylallyladenine + D-ribose 5-phosphate. The catalysed reaction is 9-ribosyl-trans-zeatin 5'-phosphate + H2O = trans-zeatin + D-ribose 5-phosphate. Its function is as follows. Catalyzes the hydrolytic removal of ribose 5'-monophosphate from nitrogen N6-modified adenosines, the final step of bioactive cytokinin synthesis. The sequence is that of Cytokinin riboside 5'-monophosphate phosphoribohydrolase from Mycobacterium marinum (strain ATCC BAA-535 / M).